Reading from the N-terminus, the 182-residue chain is MESILFIAIAFLINSFISYKITNMQPKIKSRIFKRVKMHYLNLIEGKKAEFDKKAMPILFGFMIIALISFNILLYVVYNCPVSITSIIAEILIIISMIIIWKAFNKEISVYLCDDGIYYSNKFISWKNIENVKKDDGFIVLFGKKKKILGRKLYLLQRIYLKYDEEIENIIKNQIEKFRDKA.

Helical transmembrane passes span 58-78 (ILFG…YVVY) and 81-101 (PVSI…IIIW).

It to M.jannaschii MJ0803.

The protein localises to the cell membrane. This is an uncharacterized protein from Methanocaldococcus jannaschii (strain ATCC 43067 / DSM 2661 / JAL-1 / JCM 10045 / NBRC 100440) (Methanococcus jannaschii).